Consider the following 341-residue polypeptide: Uroporphyrinogen decarboxylase (341 aa).

Substrate-binding positions include 23–27 (RQAGR), Asp73, Tyr148, Ser203, and His318.

The protein belongs to the uroporphyrinogen decarboxylase family. In terms of assembly, homodimer.

It localises to the cytoplasm. The enzyme catalyses uroporphyrinogen III + 4 H(+) = coproporphyrinogen III + 4 CO2. Its pathway is porphyrin-containing compound metabolism; protoporphyrin-IX biosynthesis; coproporphyrinogen-III from 5-aminolevulinate: step 4/4. In terms of biological role, catalyzes the decarboxylation of four acetate groups of uroporphyrinogen-III to yield coproporphyrinogen-III. This is Uroporphyrinogen decarboxylase from Brucella anthropi (strain ATCC 49188 / DSM 6882 / CCUG 24695 / JCM 21032 / LMG 3331 / NBRC 15819 / NCTC 12168 / Alc 37) (Ochrobactrum anthropi).